Here is a 342-residue protein sequence, read N- to C-terminus: Isopentenyl-diphosphate delta-isomerase (342 aa).

Residue 11 to 12 participates in substrate binding; that stretch reads RK. Residues serine 68, 69-71, serine 99, and asparagine 127 contribute to the FMN site; that span reads SMT. Residue 99 to 101 coordinates substrate; that stretch reads SMR. Glutamine 162 contacts substrate. Residue glutamate 163 participates in Mg(2+) binding. FMN contacts are provided by residues lysine 194, threonine 224, 274 to 276, and 295 to 296; these read GLK and AG.

It belongs to the IPP isomerase type 2 family. Homooctamer. Dimer of tetramers. Requires FMN as cofactor. NADPH is required as a cofactor. It depends on Mg(2+) as a cofactor.

The protein localises to the cytoplasm. The catalysed reaction is isopentenyl diphosphate = dimethylallyl diphosphate. Its function is as follows. Involved in the biosynthesis of isoprenoids. Catalyzes the 1,3-allylic rearrangement of the homoallylic substrate isopentenyl (IPP) to its allylic isomer, dimethylallyl diphosphate (DMAPP). The sequence is that of Isopentenyl-diphosphate delta-isomerase from Rickettsia peacockii (strain Rustic).